The following is a 192-amino-acid chain: dTTP/UTP pyrophosphatase (192 aa).

Residue Asp-70 is the Proton acceptor of the active site.

It belongs to the Maf family. YhdE subfamily. It depends on a divalent metal cation as a cofactor.

The protein resides in the cytoplasm. The catalysed reaction is dTTP + H2O = dTMP + diphosphate + H(+). It carries out the reaction UTP + H2O = UMP + diphosphate + H(+). Nucleoside triphosphate pyrophosphatase that hydrolyzes dTTP and UTP. May have a dual role in cell division arrest and in preventing the incorporation of modified nucleotides into cellular nucleic acids. The protein is dTTP/UTP pyrophosphatase of Clostridium perfringens (strain SM101 / Type A).